The following is a 142-amino-acid chain: Transcriptional regulator MraZ (142 aa).

SpoVT-AbrB domains lie at 5–47 (EYPY…PLAS) and 76–119 (ANKA…NPER).

The protein belongs to the MraZ family. Forms oligomers.

The protein resides in the cytoplasm. The protein localises to the nucleoid. The sequence is that of Transcriptional regulator MraZ from Deinococcus geothermalis (strain DSM 11300 / CIP 105573 / AG-3a).